The chain runs to 103 residues: Histone H4.2 (103 aa).

A compositionally biased stretch (gly residues) spans 1–14 (MTGRGKGGKGLGKG). The segment at 1–20 (MTGRGKGGKGLGKGGAKRHR) is disordered. Lys6 carries the post-translational modification N6-acetyl-N6-methyllysine; alternate. N6-methyllysine; alternate is present on residues Lys6, Lys9, and Lys13. Lys13 carries the N6-acetyl-N6-methyllysine; alternate modification. Residues 17 to 21 (KRHRK) mediate DNA binding. Lys92 carries the post-translational modification N6-glutaryllysine.

It belongs to the histone H4 family. As to quaternary structure, the nucleosome is a histone octamer containing two molecules each of H2A, H2B, H3 and H4 assembled in one H3-H4 heterotetramer and two H2A-H2B heterodimers. The octamer wraps approximately 147 bp of DNA. Post-translationally, glutarylation at Lys-92 (H4K91glu) destabilizes nucleosomes by promoting dissociation of the H2A-H2B dimers from nucleosomes.

It localises to the nucleus. It is found in the chromosome. Functionally, core component of nucleosome. Nucleosomes wrap and compact DNA into chromatin, limiting DNA accessibility to the cellular machineries which require DNA as a template. Histones thereby play a central role in transcription regulation, DNA repair, DNA replication and chromosomal stability. DNA accessibility is regulated via a complex set of post-translational modifications of histones, also called histone code, and nucleosome remodeling. The sequence is that of Histone H4.2 (H4.2) from Talaromyces funiculosus (Fruitlet core rot fungus).